An 804-amino-acid chain; its full sequence is DNA mismatch repair protein MutS (804 aa).

Residue 614–621 participates in ATP binding; sequence GPNMAGKS.

It belongs to the DNA mismatch repair MutS family.

Its function is as follows. This protein is involved in the repair of mismatches in DNA. It is possible that it carries out the mismatch recognition step. This protein has a weak ATPase activity. This Ehrlichia ruminantium (strain Gardel) protein is DNA mismatch repair protein MutS.